Consider the following 112-residue polypeptide: Large ribosomal subunit protein uL24 (112 aa).

It belongs to the universal ribosomal protein uL24 family. Part of the 50S ribosomal subunit.

Functionally, one of two assembly initiator proteins, it binds directly to the 5'-end of the 23S rRNA, where it nucleates assembly of the 50S subunit. In terms of biological role, one of the proteins that surrounds the polypeptide exit tunnel on the outside of the subunit. The polypeptide is Large ribosomal subunit protein uL24 (Desulfitobacterium hafniense (strain Y51)).